Here is a 717-residue protein sequence, read N- to C-terminus: Ubiquitin carboxyl-terminal hydrolase 11 (717 aa).

Residues 231–268 (ATAPPVHSLEVSSQIRDSSQDSSSSLSKVEKPKEEEGK) form a disordered region. Over residues 242–257 (SSQIRDSSQDSSSSLS) the composition is skewed to low complexity. Basic and acidic residues predominate over residues 258-268 (KVEKPKEEEGK). One can recognise a USP domain in the interval 298-707 (TGLQNPCNTC…EVYVLFYERM (410 aa)). Cysteine 307 serves as the catalytic Nucleophile. The disordered stretch occupies residues 531 to 577 (KKEEITSQKKKSTIFGFHSRSRSKSPHHHHHHHHSSDDSTKNAKKRN). Residues 549–564 (SRSRSKSPHHHHHHHH) are compositionally biased toward basic residues. The active-site Proton acceptor is the histidine 649.

This sequence belongs to the peptidase C19 family.

It catalyses the reaction Thiol-dependent hydrolysis of ester, thioester, amide, peptide and isopeptide bonds formed by the C-terminal Gly of ubiquitin (a 76-residue protein attached to proteins as an intracellular targeting signal).. This chain is Ubiquitin carboxyl-terminal hydrolase 11 (UBP11), found in Saccharomyces cerevisiae (strain ATCC 204508 / S288c) (Baker's yeast).